The following is a 211-amino-acid chain: MRAIRMLLVSALTLGSLSATLSAHAGEQDVQRLTQLLEKSQTIEANFSQLTLDAGGTSLQETTGKMTVKRPGLFYWHTDAPQEQVVVSDGKNVTLWDPDLEQATIKKLDVRLNQTPALLLSGDVSKISQSFDITSKEQGEVMDFTLKPTTKDTLFDSLRVSFRRGLINDMQLIDSVGQRTNILFNGVKANQAVPDSTFKFDIPKGADVIKE.

Positions 1-25 are cleaved as a signal peptide; that stretch reads MRAIRMLLVSALTLGSLSATLSAHA.

The protein belongs to the LolA family. Monomer.

It localises to the periplasm. In terms of biological role, participates in the translocation of lipoproteins from the inner membrane to the outer membrane. Only forms a complex with a lipoprotein if the residue after the N-terminal Cys is not an aspartate (The Asp acts as a targeting signal to indicate that the lipoprotein should stay in the inner membrane). This Pseudomonas putida (strain W619) protein is Outer-membrane lipoprotein carrier protein.